The primary structure comprises 398 residues: DNA polymerase IV (398 aa).

The 183-residue stretch at 5–187 folds into the UmuC domain; the sequence is IFLVDMNAFF…LSIKSMHGVG (183 aa). Residues aspartate 9 and aspartate 105 each coordinate Mg(2+). Residue glutamate 106 is part of the active site.

This sequence belongs to the DNA polymerase type-Y family. Monomer. It depends on Mg(2+) as a cofactor.

The protein resides in the cytoplasm. The enzyme catalyses DNA(n) + a 2'-deoxyribonucleoside 5'-triphosphate = DNA(n+1) + diphosphate. Functionally, poorly processive, error-prone DNA polymerase involved in untargeted mutagenesis. Copies undamaged DNA at stalled replication forks, which arise in vivo from mismatched or misaligned primer ends. These misaligned primers can be extended by PolIV. Exhibits no 3'-5' exonuclease (proofreading) activity. May be involved in translesional synthesis, in conjunction with the beta clamp from PolIII. The sequence is that of DNA polymerase IV from Alkaliphilus oremlandii (strain OhILAs) (Clostridium oremlandii (strain OhILAs)).